The following is a 126-amino-acid chain: Membrane-anchored ubiquitin-fold protein 2 (126 aa).

The region spanning 14 to 79 (VEVRFRLDDG…VLENNRTLAE (66 aa)) is the Ubiquitin-like domain. Residue Cys123 is modified to Cysteine methyl ester. Cys123 is lipidated: S-geranylgeranyl cysteine. The propeptide at 124-126 (TIL) is removed in mature form.

The protein resides in the cell membrane. May serve as docking site to facilitate the association of other proteins to the plasma membrane. The sequence is that of Membrane-anchored ubiquitin-fold protein 2 (MUB2) from Oryza sativa subsp. japonica (Rice).